The chain runs to 33 residues: Photosystem II reaction center protein Psb30 (33 aa).

Residues 5 to 25 form a helical membrane-spanning segment; the sequence is VIAQLTVLALIVASGPLVIAL.

Belongs to the Psb30/Ycf12 family. PSII is composed of 1 copy each of membrane proteins PsbA, PsbB, PsbC, PsbD, PsbE, PsbF, PsbH, PsbI, PsbJ, PsbK, PsbL, PsbM, PsbT, PsbX, PsbY, PsbZ, Psb30/Ycf12, peripheral proteins of the oxygen-evolving complex and a large number of cofactors. It forms dimeric complexes.

The protein resides in the plastid. Its subcellular location is the chloroplast thylakoid membrane. In terms of biological role, a core subunit of photosystem II (PSII), probably helps stabilize the reaction center. This Marchantia polymorpha (Common liverwort) protein is Photosystem II reaction center protein Psb30.